The primary structure comprises 113 residues: T cell receptor alpha variable 8-6 (113 aa).

Residues 1-20 form the signal peptide; it reads MLLLLVPAFQVIFTLGGTRA. Residues 21-113 form the Ig-like domain; sequence QSVTQLDSQV…DTAEYFCAVS (93 aa). Residues Cys-42 and Cys-110 are joined by a disulfide bond. Asn-43 and Asn-87 each carry an N-linked (GlcNAc...) asparagine glycan.

In terms of assembly, alpha-beta TR is a heterodimer composed of an alpha and beta chain; disulfide-linked. The alpha-beta TR is associated with the transmembrane signaling CD3 coreceptor proteins to form the TR-CD3 (TcR or TCR). The assembly of alpha-beta TR heterodimers with CD3 occurs in the endoplasmic reticulum where a single alpha-beta TR heterodimer associates with one CD3D-CD3E heterodimer, one CD3G-CD3E heterodimer and one CD247 homodimer forming a stable octameric structure. CD3D-CD3E and CD3G-CD3E heterodimers preferentially associate with TR alpha and TR beta chains, respectively. The association of the CD247 homodimer is the last step of TcR assembly in the endoplasmic reticulum and is required for transport to the cell surface.

The protein resides in the cell membrane. Functionally, v region of the variable domain of T cell receptor (TR) alpha chain that participates in the antigen recognition. Alpha-beta T cell receptors are antigen specific receptors which are essential to the immune response and are present on the cell surface of T lymphocytes. Recognize peptide-major histocompatibility (MH) (pMH) complexes that are displayed by antigen presenting cells (APC), a prerequisite for efficient T cell adaptive immunity against pathogens. Binding of alpha-beta TR to pMH complex initiates TR-CD3 clustering on the cell surface and intracellular activation of LCK that phosphorylates the ITAM motifs of CD3G, CD3D, CD3E and CD247 enabling the recruitment of ZAP70. In turn ZAP70 phosphorylates LAT, which recruits numerous signaling molecules to form the LAT signalosome. The LAT signalosome propagates signal branching to three major signaling pathways, the calcium, the mitogen-activated protein kinase (MAPK) kinase and the nuclear factor NF-kappa-B (NF-kB) pathways, leading to the mobilization of transcription factors that are critical for gene expression and essential for T cell growth and differentiation. The T cell repertoire is generated in the thymus, by V-(D)-J rearrangement. This repertoire is then shaped by intrathymic selection events to generate a peripheral T cell pool of self-MH restricted, non-autoaggressive T cells. Post-thymic interaction of alpha-beta TR with the pMH complexes shapes TR structural and functional avidity. The protein is T cell receptor alpha variable 8-6 of Homo sapiens (Human).